A 96-amino-acid polypeptide reads, in one-letter code: Nucleoid-associated protein CT_335 (96 aa).

It belongs to the YbaB/EbfC family. In terms of assembly, homodimer.

It is found in the cytoplasm. It localises to the nucleoid. In terms of biological role, binds to DNA and alters its conformation. May be involved in regulation of gene expression, nucleoid organization and DNA protection. This Chlamydia trachomatis serovar D (strain ATCC VR-885 / DSM 19411 / UW-3/Cx) protein is Nucleoid-associated protein CT_335.